The chain runs to 560 residues: MSKTQEFRPLTLPPKLSLSDFNEFIQDIIRIVGSENVEVISSKDQIVDGSYMKPTHTHDPHHVMDQDYFLASAIVAPRNVADVQSIVGLANKFSFPLWPISIGRNSGYGGAAPRVSGSVVLDMGKNMNRVLEVNVEGAYCVVEPGVTYHDLHNYLEANNLRDKLWLDVPDLGGGSVLGNAVERGVGYTPYGDHWMMHSGMEVVLANGELLRTGMGALPDPKRPETMGLKPEDQPWSKIAHLFPYGFGPYIDGLFSQSNMGIVTKIGIWLMPNPRGYQSYLITLPKDGDLKQAVDIIRPLRLGMALQNVPTIRHILLDAAVLGDKRSYSSRTEPLSDEELDKIAKQLNLGRWNFYGALYGPEPIRRVLWETIKDAFSAIPGVKFYFPEDTPENSVLRVRDKTMQGIPTYDELKWIDWLPNGAHLFFSPIAKVSGEDAMMQYAVTKKRCQEAGLDFIGTFTVGMREMHHIVCIVFNKKDLIQKRKVQWLMRTLIDDCAANGWGEYRTHLAFMDQIMETYNWNNSSFLRFNEVLKNAVDPNGIIAPGKSGVWPSQYSHVTWKL.

In terms of domain architecture, FAD-binding PCMH-type spans D67–N272. The active site involves Y108. H422 is modified (tele-8alpha-FAD histidine). Active-site residues include Y503 and R504.

This sequence to bacterial flavocytochrome p-cresol methyl hydroxylase. Homooctamer (tetramer of tightly interacting dimers). The cofactor is FAD.

The protein localises to the peroxisome. It localises to the cytoplasm. It catalyses the reaction 4-hydroxy-3-methoxy-benzenemethanol + O2 = vanillin + H2O2. Its activity is regulated as follows. Competitively inhibited by cinnamyl and coniferyl alcohols and by isoeugenol. Functionally, catalyzes the conversion of vanillin alcohol to vanillin, and also the conversion of a wide range of phenolic compounds bearing side chains of variable size at the para position of the aromatic ring. Crucial for the degradation of the secondary metabolites derived from the degradation of the lignin. Catalyzes besides the oxidation of 4-hydroxybenzyl alcohols, the oxidative deamination of 4-hydroxybenzylamines, the oxidative demethylation of 4-(methoxy-methyl)phenols and the oxidative hydration of 4-allylphenols. Most active with 4-allylphenols. The chain is Vanillyl-alcohol oxidase (VAOA) from Penicillium simplicissimum.